The sequence spans 218 residues: Glutathione S-transferase Mu 1 (218 aa).

A GST N-terminal domain is found at 2-88 (PMILGYWDIR…YIARKHNLCG (87 aa)). Glutathione contacts are provided by residues 7–8 (YW), 43–46 (RSQW), Lys-50, 59–60 (NL), and 72–73 (QS). In terms of domain architecture, GST C-terminal spans 90–208 (TEEEMIRVDI…KSSRFLPGPL (119 aa)). Tyr-116 contacts substrate.

The protein belongs to the GST superfamily. Mu family. In terms of assembly, homodimer.

It is found in the cytoplasm. The catalysed reaction is RX + glutathione = an S-substituted glutathione + a halide anion + H(+). It catalyses the reaction prostaglandin A2 + glutathione = prostaglandin A2-S-(R)-glutathione. The enzyme catalyses prostaglandin J2 + glutathione = prostaglandin J2-S-(R)-glutathione. It carries out the reaction prostaglandin J2 + glutathione = prostaglandin J2-S-(S)-glutathione. The catalysed reaction is prostaglandin A2 + glutathione = prostaglandin A2-S-(S)-glutathione. It catalyses the reaction 11(S)-hydroxy-14(S),15(S)-epoxy-(5Z,8Z,12E)-eicosatrienoate + glutathione = (11S,15S)-dihydroxy-14(R)-S-glutathionyl-(5Z,8Z,12E)-eicosatrienoate. Functionally, conjugation of reduced glutathione to a wide number of exogenous and endogenous hydrophobic electrophiles. Protects against the thiol-mediated metal-catalyzed oxidative inactivation of enzymes. Involved in the formation of glutathione conjugates of both prostaglandin A2 (PGA2) and prostaglandin J2 (PGJ2). Participates in the formation of novel hepoxilin regioisomers. This chain is Glutathione S-transferase Mu 1 (GSTM1), found in Bos taurus (Bovine).